The following is a 150-amino-acid chain: Large ribosomal subunit protein uL15 (150 aa).

The span at 1 to 15 (MNLSNLQPAEGSTHN) shows a compositional bias: polar residues. The interval 1–53 (MNLSNLQPAEGSTHNQNKRVGRGEGSGKGGTAARGHKGAKSRSGYSKKIGFEG) is disordered. Over residues 23-32 (GEGSGKGGTA) the composition is skewed to gly residues.

It belongs to the universal ribosomal protein uL15 family. Part of the 50S ribosomal subunit.

In terms of biological role, binds to the 23S rRNA. In Flavobacterium johnsoniae (strain ATCC 17061 / DSM 2064 / JCM 8514 / BCRC 14874 / CCUG 350202 / NBRC 14942 / NCIMB 11054 / UW101) (Cytophaga johnsonae), this protein is Large ribosomal subunit protein uL15.